We begin with the raw amino-acid sequence, 748 residues long: CCR4-NOT transcription complex subunit 10-A (748 aa).

Residues 1–17 (MAADKAGEQGAEKHEDS) are compositionally biased toward basic and acidic residues. Disordered regions lie at residues 1–25 (MAADKAGEQGAEKHEDSANCSGISD), 184–205 (SNNKNGKNNETNSNANNREPFA), 483–524 (KQEN…PPSS), and 605–635 (VSLGVSSNEQEQGSDKGENEPMESVGKQMPQ). Low complexity predominate over residues 185–200 (NNKNGKNNETNSNANN). Composition is skewed to polar residues over residues 487 to 509 (GSKTSSQTGNTDSGGESSEVCSN) and 605 to 615 (VSLGVSSNEQE).

Belongs to the CNOT10 family. In terms of assembly, component of the CCR4-NOT complex. cnot10 and cnot11 form a subcomplex docked to the cnot1 scaffold.

The protein resides in the cytoplasm. It is found in the nucleus. Functionally, component of the CCR4-NOT complex which is one of the major cellular mRNA deadenylases and is linked to various cellular processes including bulk mRNA degradation, miRNA-mediated repression, translational repression during translational initiation and general transcription regulation. Additional complex functions may be a consequence of its influence on mRNA expression. Is not required for association of CNOT7 to the CCR4-NOT complex. The chain is CCR4-NOT transcription complex subunit 10-A (cnot10-a) from Xenopus laevis (African clawed frog).